The sequence spans 75 residues: Putative UPF0377 protein YAL067W-A (75 aa).

It belongs to the UPF0377 family.

This chain is Putative UPF0377 protein YAL067W-A, found in Saccharomyces cerevisiae (strain ATCC 204508 / S288c) (Baker's yeast).